The chain runs to 100 residues: Urease subunit gamma (100 aa).

This sequence belongs to the urease gamma subunit family. In terms of assembly, heterotrimer of UreA (gamma), UreB (beta) and UreC (alpha) subunits. Three heterotrimers associate to form the active enzyme.

The protein localises to the cytoplasm. The catalysed reaction is urea + 2 H2O + H(+) = hydrogencarbonate + 2 NH4(+). The protein operates within nitrogen metabolism; urea degradation; CO(2) and NH(3) from urea (urease route): step 1/1. The sequence is that of Urease subunit gamma from Agrobacterium fabrum (strain C58 / ATCC 33970) (Agrobacterium tumefaciens (strain C58)).